The sequence spans 179 residues: Orotate phosphoribosyltransferase (179 aa).

Residues Arg94, Lys95, Lys98, His100, and 120–128 each bind 5-phospho-alpha-D-ribose 1-diphosphate; that span reads EDTSTTGNS. Orotate is bound by residues Thr124 and Arg152.

The protein belongs to the purine/pyrimidine phosphoribosyltransferase family. PyrE subfamily. Homodimer. Mg(2+) is required as a cofactor.

The enzyme catalyses orotidine 5'-phosphate + diphosphate = orotate + 5-phospho-alpha-D-ribose 1-diphosphate. The protein operates within pyrimidine metabolism; UMP biosynthesis via de novo pathway; UMP from orotate: step 1/2. Catalyzes the transfer of a ribosyl phosphate group from 5-phosphoribose 1-diphosphate to orotate, leading to the formation of orotidine monophosphate (OMP). This chain is Orotate phosphoribosyltransferase, found in Mycobacterium avium (strain 104).